A 2089-amino-acid polypeptide reads, in one-letter code: MEDTQAIDWDVEEEEETEQSSESLRCNVEPVGRLHIFSGAHGPEKDFPLHLGKNVVGRMPDCSVALPFPSISKQHAEIEILAWDKAPILRDCGSLNGTQILRPPKVLSPGVSHRLRDQELILFADLLCQYHRLDVSLPFVSRGPLTVEETPRVQGETQPQRLLLAEDSEEEVDFLSERRMVKKSRTTSSSVIVPESDEEGHSPVLGGLGPPFAFNLNSDTDVEEGQQPATEEASSAARRGATVEAKQSEAEVVTEIQLEKDQPLVKERDNDTKVKRGAGNGVVPAGVILERSQPPGEDSDTDVDDDSRPPGRPAEVHLERAQPFGFIDSDTDAEEERIPATPVVIPMKKRKIFHGVGTRGPGAPGLAHLQESQAGSDTDVEEGKAPQAVPLEKSQASMVINSDTDDEEEVSAALTLAHLKESQPAIWNRDAEEDMPQRVVLLQRSQTTTERDSDTDVEEEELPVENREAVLKDHTKIRALVRAHSEKDQPPFGDSDDSVEADKSSPGIHLERSQASTTVDINTQVEKEVPPGSAIIHIKKHQVSVEGTNQTDVKAVGGPAKLLVVSLEEAWPLHGDCETDAEEGTSLTASVVADVRKSQLPAEGDAGAEWAAAVLKQERAHEVGAQGGPPVAQVEQDLPISRENLTDLVVDTDTLGESTQPQREGAQVPTGREREQHVGGTKDSEDNYGDSEDLDLQATQCFLENQGLEAVQSMEDEPTQAFMLTPPQELGPSHCSFQTTGTLDEPWEVLATQPFCLRESEDSETQPFDTHLEAYGPCLSPPRAIPGDQHPESPVHTEPMGIQGRGRQTVDKVMGIPKETAERVGPERGPLERETEKLLPERQTDVTGEEELTKGKQDREQKQLLARDTQRQESDKNGESASPERDRESLKVEIETSEEIQEKQVQKQTLPSKAFEREVERPVANRECDPAELEEKVPKVILERDTQRGEPEGGSQDQKGQASSPTPEPGVGAGDLPGPTSAPVPSGSQSGGRGSPVSPRRHQKGLLNCKMPPAEKASRIRAAEKVSRGDQESPDACLPPTVPEAPAPPQKPLNSQSQKHLAPPPLLSPLLPSIKPTVRKTRQDGSQEAPEAPLSSELEPFHPKPKIRTRKSSRMTPFPATSAAPEPHPSTSTAQPVTPKPTSQATRSRTNRSSVKTPEPVVPTAPELQPSTSTDQPVTSEPTSQVTRGRKSRSSVKTPETVVPTALELQPSTSTDRPVTSEPTSQATRGRKNRSSVKTPEPVVPTAPELQPSTSTDQPVTSEPTYQATRGRKNRSSVKTPEPVVPTAPELRPSTSTDRPVTPKPTSRTTRSRTNMSSVKTPETVVPTAPELQISTSTDQPVTPKPTSRTTRSRTNMSSVKNPESTVPIAPELPPSTSTEQPVTPEPTSRATRGRKNRSSGKTPETLVPTAPKLEPSTSTDQPVTPEPTSQATRGRTNRSSVKTPETVVPTAPELQPSTSTDQPVTPEPTSQATRGRTDRSSVKTPETVVPTAPELQASASTDQPVTSEPTSRTTRGRKNRSSVKTPETVVPAAPELQPSTSTDQPVTPEPTSRATRGRTNRSSVKTPESIVPIAPELQPSTSRNQLVTPEPTSRATRCRTNRSSVKTPEPVVPTAPEPHPTTSTDQPVTPKLTSRATRRKTNRSSVKTPKPVEPAASDLEPFTPTDQSVTPEAIAQGGQSKTLRSSTVRAMPVPTTPEFQSPVTTDQPISPEPITQPSCIKRQRAAGNPGSLAAPIDHKPCSAPLEPKSQASRNQRWGAVRAAESLTAIPEPASPQLLETPIHASQIQKVEPAGRSRFTPELQPKASQSRKRSLATMDSPPHQKQPQRGEVSQKTVIIKEEEEDTAEKPGKEEDVVTPKPGKRKRDQAEEEPNRIPSRSLRRTKLNQESTAPKVLFTGVVDARGERAVLALGGSLAGSAAEASHLVTDRIRRTVKFLCALGRGIPILSLDWLHQSRKAGFFLPPDEYVVTDPEQEKNFGFSLQDALSRARERRLLEGYEIYVTPGVQPPPPQMGEIISCCGGTYLPSMPRSYKPQRVVITCPQDFPHCSIPLRVGLPLLSPEFLLTGVLKQEAKPEAFVLSPLEMSST.

Over residues 1-19 (MEDTQAIDWDVEEEEETEQ) the composition is skewed to acidic residues. Positions 1–22 (MEDTQAIDWDVEEEEETEQSSE) are disordered. The interval 1–150 (MEDTQAIDWD…SRGPLTVEET (150 aa)) is interaction with CHEK2. The interval 2–220 (EDTQAIDWDV…PFAFNLNSDT (219 aa)) is interaction with the MRN complex. Phosphothreonine; by ATM is present on Thr4. The FHA domain maps to 54–105 (NVVGRMPDCSVALPFPSISKQHAEIEILAWDKAPILRDCGSLNGTQILRPPK). At Ser108 the chain carries Phosphoserine. The tract at residues 145 to 568 (LTVEETPRVQ…PAKLLVVSLE (424 aa)) is required for nuclear localization (NLS1). The residue at position 146 (Thr146) is a Phosphothreonine. Position 168 is a phosphoserine; by CK2 (Ser168). Phosphoserine is present on Ser176. Disordered stretches follow at residues 185-248 (RTTS…AKQS), 261-280 (DQPL…GAGN), and 286-317 (GVIL…AEVH). 2 positions are modified to phosphoserine; by CK2: Ser196 and Ser218. Thr220 carries the phosphothreonine; by CK2 modification. Basic and acidic residues predominate over residues 261 to 274 (DQPLVKERDNDTKV). A Phosphoserine; by CK2 modification is found at Ser299. Thr301 carries the phosphothreonine; by CK2 modification. Over residues 306-317 (DSRPPGRPAEVH) the composition is skewed to basic and acidic residues. Ser329 carries the post-translational modification Phosphoserine; by CK2. The residue at position 331 (Thr331) is a Phosphothreonine; by CK2. A Phosphoserine modification is found at Ser372. Phosphoserine; by CK2 is present on Ser376. Phosphothreonine; by CK2 is present on Thr378. Phosphoserine occurs at positions 394 and 397. Residue Ser402 is modified to Phosphoserine; by CK2. The residue at position 404 (Thr404) is a Phosphothreonine; by CK2. Residue Ser411 is modified to Phosphoserine. Thr449 carries the phosphothreonine modification. Ser453 carries the post-translational modification Phosphoserine; by CK2. The residue at position 455 (Thr455) is a Phosphothreonine; by CK2. The interval 482-515 (RAHSEKDQPPFGDSDDSVEADKSSPGIHLERSQA) is disordered. A phosphoserine mark is found at Ser485, Ser495, Ser498, Ser504, Ser505, and Ser513. Thr523 carries the phosphothreonine modification. Position 590 is a phosphoserine (Ser590). Lys616 participates in a covalent cross-link: Glycyl lysine isopeptide (Lys-Gly) (interchain with G-Cter in SUMO1); alternate. Lys616 participates in a covalent cross-link: Glycyl lysine isopeptide (Lys-Gly) (interchain with G-Cter in SUMO2); alternate. Disordered stretches follow at residues 653-689 (DTLG…DNYG) and 780-1887 (SPPR…TKLN). Basic and acidic residues predominate over residues 671-685 (GREREQHVGGTKDSE). 2 positions are modified to phosphoserine: Ser780 and Ser793. Lys812 is modified (N6-acetyllysine). Composition is skewed to basic and acidic residues over residues 819–844 (ETAE…ERQT), 851–862 (ELTKGKQDREQK), 868–905 (DTQR…EKQV), and 914–951 (AFER…RGEP). A phosphoserine mark is found at Ser955 and Ser998. Polar residues predominate over residues 955–965 (SQDQKGQASSP). A compositionally biased stretch (basic and acidic residues) spans 1016 to 1031 (KASRIRAAEKVSRGDQ). Ser1033 is modified (phosphoserine). The segment covering 1040–1051 (PTVPEAPAPPQK) has biased composition (pro residues). Phosphoserine occurs at positions 1068 and 1086. Positions 1103 to 1113 (PKPKIRTRKSS) are enriched in basic residues. Residues 1129–1156 (PSTSTAQPVTPKPTSQATRSRTNRSSVK) show a composition bias toward polar residues. The interaction with the PRKDC complex stretch occupies residues 1148-1610 (SRTNRSSVKT…TNRSSVKTPE (463 aa)). Phosphothreonine is present on Thr1157. Polar residues predominate over residues 1169–1187 (QPSTSTDQPVTSEPTSQVT). Residue Thr1198 is modified to Phosphothreonine. The span at 1210–1228 (QPSTSTDRPVTSEPTSQAT) shows a compositional bias: polar residues. The residue at position 1235 (Ser1235) is a Phosphoserine. Residue Thr1239 is modified to Phosphothreonine. Over residues 1251-1268 (QPSTSTDQPVTSEPTYQA) the composition is skewed to polar residues. A phosphothreonine mark is found at Thr1280 and Thr1302. Composition is skewed to low complexity over residues 1304 to 1318 (KPTS…NMSS) and 1347 to 1359 (TSRT…NMSS). The segment covering 1375–1391 (PSTSTEQPVTPEPTSRA) has biased composition (polar residues). Phosphoserine occurs at positions 1399 and 1400. Lys1402 carries the N6-acetyllysine modification. Position 1403 is a phosphothreonine (Thr1403). Lys1413 is covalently cross-linked (Glycyl lysine isopeptide (Lys-Gly) (interchain with G-Cter in SUMO1); alternate). Residue Lys1413 forms a Glycyl lysine isopeptide (Lys-Gly) (interchain with G-Cter in SUMO2); alternate linkage. Composition is skewed to polar residues over residues 1416–1444 (PSTS…SVKT), 1456–1475 (QPST…QATR), 1498–1514 (ASAS…TSRT), and 1538–1555 (QPST…TSRA). A phosphothreonine mark is found at Thr1425 and Thr1466. Phosphothreonine is present on Thr1548. Ser1564 carries the phosphoserine modification. Residues Thr1567 and Thr1589 each carry the phosphothreonine modification. Over residues 1579–1596 (QPSTSRNQLVTPEPTSRA) the composition is skewed to polar residues. Ser1604 carries the phosphoserine modification. Thr1608 is subject to Phosphothreonine. A compositionally biased stretch (pro residues) spans 1611 to 1620 (PVVPTAPEPH). Polar residues predominate over residues 1624-1636 (STDQPVTPKLTSR). Phosphothreonine occurs at positions 1630, 1664, and 1671. Over residues 1678–1689 (GGQSKTLRSSTV) the composition is skewed to polar residues. Ser1681 carries the phosphoserine modification. Phosphothreonine is present on Thr1697. Positions 1698-1719 (PEFQSPVTTDQPISPEPITQPS) are enriched in polar residues. Residues 1698–2089 (PEFQSPVTTD…VLSPLEMSST (392 aa)) are required for nuclear localization (NLS2). A phosphoserine mark is found at Ser1702 and Ser1711. Residue Lys1740 forms a Glycyl lysine isopeptide (Lys-Gly) (interchain with G-Cter in SUMO2) linkage. The residue at position 1775 (Ser1775) is a Phosphoserine. Lys1790 participates in a covalent cross-link: Glycyl lysine isopeptide (Lys-Gly) (interchain with G-Cter in SUMO2). Thr1800 bears the Phosphothreonine mark. Ser1820 carries the phosphoserine modification. The segment covering 1823–1836 (HQKQPQRGEVSQKT) has biased composition (polar residues). Lys1840 participates in a covalent cross-link: Glycyl lysine isopeptide (Lys-Gly) (interchain with G-Cter in SUMO1); alternate. Lys1840 is covalently cross-linked (Glycyl lysine isopeptide (Lys-Gly) (interchain with G-Cter in SUMO2); alternate). Over residues 1847-1857 (AEKPGKEEDVV) the composition is skewed to basic and acidic residues. Residue Thr1858 is modified to Phosphothreonine. BRCT domains lie at 1892–1970 (APKV…EYVV) and 1991–2082 (RERR…FVLS). An Omega-N-methylarginine modification is found at Arg1943.

Homodimer. Interacts with H2AX, which requires phosphorylation of H2AX on 'Ser-139'. Interacts with the MRN complex, composed of MRE11, RAD50, and NBN. Interacts with CHEK2, which requires ATM-mediated phosphorylation of 'Thr-68' within the FHA domain of CHEK2. Interacts constitutively with the BRCA1-BARD1 complex, SMC1A and TP53BP1. Interacts with ATM and FANCD2, and these interactions are reduced upon DNA damage. Also interacts with the PRKDC complex, composed of XRCC6/KU70, XRCC5/KU80 and PRKDC/XRCC7. This interaction may be required for PRKDC autophosphorylation, which is essential for DNA double strand break (DSB) repair. When phosphorylated by ATM, interacts with RNF8 (via FHA domain). Interacts with CEP164. When phosphorylated, interacts with APTX (via FHA-like domain). Interacts (when phosphorylated) with TOPBP1; promoting TOPBP1 localization to DNA damage sites during mitosis. Interacts (when phosphorylated) with NBN; promoting NBN and MRN complex localization to DNA damage sites. In terms of processing, phosphorylated upon exposure to ionizing radiation (IR), ultraviolet radiation (UV), and hydroxyurea (HU). Phosphorylation in response to IR requires ATM, NBN, and possibly CHEK2. Also phosphorylated during the G2/M phase of the cell cycle and during activation of the mitotic spindle checkpoint. Phosphorylation at Thr-4 by ATM stabilizes and enhances homodimerization via the FHA domain. Phosphorylated at Ser-168 and Ser-196 by CK2 in response to DNA damage during mitosis, promoting interaction with TOPBP1. Phosphorylated by CK2 in response to DNA damage, promoting interaction with NBN and recruitment of the MRN complex to DNA damage sites. Sumoylation at Lys-1840 by PIAS4 following DNA damage promotes ubiquitin-mediated degradation. Post-translationally, ubiquitinated by RNF4, leading to proteasomal degradation; undergoes 'Lys-48'-linked polyubiquitination. As to expression, highly expressed in testis.

Its subcellular location is the nucleus. It is found in the chromosome. Histone reader protein required for checkpoint-mediated cell cycle arrest in response to DNA damage within both the S phase and G2/M phases of the cell cycle. Specifically recognizes and binds histone H2AX phosphorylated at 'Ser-139', a marker of DNA damage, serving as a scaffold for the recruitment of DNA repair and signal transduction proteins to discrete foci of DNA damage sites. Also required for downstream events subsequent to the recruitment of these proteins. These include phosphorylation and activation of the ATM, CHEK1 and CHEK2 kinases, and stabilization of TP53/p53 and apoptosis. ATM and CHEK2 may also be activated independently by a parallel pathway mediated by TP53BP1. Required for chromosomal stability during mitosis by promoting recruitment of TOPBP1 to DNA double strand breaks (DSBs): TOPBP1 forms filamentous assemblies that bridge MDC1 and tether broken chromosomes during mitosis. Required for the repair of DSBs via homologous recombination by promoting recruitment of NBN component of the MRN complex to DSBs. The sequence is that of Mediator of DNA damage checkpoint protein 1 from Homo sapiens (Human).